The primary structure comprises 186 residues: Glutathione peroxidase 7 (186 aa).

The N-terminal stretch at 1-18 (MVAARAAAWLLLAAAACA) is a signal peptide. C56 is an active-site residue.

This sequence belongs to the glutathione peroxidase family.

The protein localises to the secreted. It catalyses the reaction 2 glutathione + H2O2 = glutathione disulfide + 2 H2O. The protein is Glutathione peroxidase 7 (GPX7) of Bos taurus (Bovine).